A 335-amino-acid chain; its full sequence is Acetyl-coenzyme A carboxylase carboxyl transferase subunit alpha (335 aa).

Residues 40–294 form the CoA carboxyltransferase C-terminal domain; it reads QLETLATRRR…KASIERHLSE (255 aa).

It belongs to the AccA family. As to quaternary structure, acetyl-CoA carboxylase is a heterohexamer composed of biotin carboxyl carrier protein (AccB), biotin carboxylase (AccC) and two subunits each of ACCase subunit alpha (AccA) and ACCase subunit beta (AccD).

The protein localises to the cytoplasm. It catalyses the reaction N(6)-carboxybiotinyl-L-lysyl-[protein] + acetyl-CoA = N(6)-biotinyl-L-lysyl-[protein] + malonyl-CoA. It functions in the pathway lipid metabolism; malonyl-CoA biosynthesis; malonyl-CoA from acetyl-CoA: step 1/1. In terms of biological role, component of the acetyl coenzyme A carboxylase (ACC) complex. First, biotin carboxylase catalyzes the carboxylation of biotin on its carrier protein (BCCP) and then the CO(2) group is transferred by the carboxyltransferase to acetyl-CoA to form malonyl-CoA. The sequence is that of Acetyl-coenzyme A carboxylase carboxyl transferase subunit alpha from Prochlorococcus marinus (strain MIT 9515).